Here is a 646-residue protein sequence, read N- to C-terminus: Depudecin biosynthesis cluster-specific transcription activator DEP6 (646 aa).

The segment at residues C16–C43 is a DNA-binding region (zn(2)-C6 fungal-type). 2 disordered regions span residues T76–Q130 and K345–P366. Over residues S349–G360 the composition is skewed to polar residues.

The protein localises to the nucleus. Functionally, transcription factor that positively regulates the expression of the gene cluster that mediates the biosynthesis of depudecin, a highly oxidized eleven-carbon linear polyketide that acts as a histone deacetylase (HDAC) inhibitor and makes a small contribution to pathogenesis. This is Depudecin biosynthesis cluster-specific transcription activator DEP6 from Alternaria brassicicola (Dark leaf spot agent).